We begin with the raw amino-acid sequence, 120 residues long: UPF0344 protein LMOf2365_2298 (120 aa).

4 helical membrane passes run 3 to 23, 33 to 53, 62 to 82, and 92 to 112; these read GYIHLISWVAIVVLTVTALLI, MLQMINRVFYILVILSGIMMV, ILAIFKILMGIIVIGVVEMLL, and GMFLMIFVIVVVITISLGFYL.

Belongs to the UPF0344 family.

The protein resides in the cell membrane. The polypeptide is UPF0344 protein LMOf2365_2298 (Listeria monocytogenes serotype 4b (strain F2365)).